A 201-amino-acid polypeptide reads, in one-letter code: Inosine triphosphate pyrophosphatase (201 aa).

13 to 18 (TGNAKK) is a binding site for ITP. E43 provides a ligand contact to Mg(2+). ITP is bound by residues K55, 71-72 (DT), K88, 148-151 (FGWD), K171, and 176-177 (HR).

It belongs to the HAM1 NTPase family. As to quaternary structure, homodimer. Mg(2+) serves as cofactor. Requires Mn(2+) as cofactor.

The protein localises to the cytoplasm. It carries out the reaction ITP + H2O = IMP + diphosphate + H(+). It catalyses the reaction dITP + H2O = dIMP + diphosphate + H(+). The catalysed reaction is XTP + H2O = XMP + diphosphate + H(+). The enzyme catalyses N(6)-hydroxy-dATP + H2O = N(6)-hydroxy-dAMP + diphosphate + H(+). Functionally, pyrophosphatase that hydrolyzes the non-canonical purine nucleotides inosine triphosphate (ITP), deoxyinosine triphosphate (dITP) as well as 2'-deoxy-N-6-hydroxylaminopurine triphosphate (dHAPTP) and xanthosine 5'-triphosphate (XTP) to their respective monophosphate derivatives. The enzyme does not distinguish between the deoxy- and ribose forms. Probably excludes non-canonical purines from RNA and DNA precursor pools, thus preventing their incorporation into RNA and DNA and avoiding chromosomal lesions. In Gallus gallus (Chicken), this protein is Inosine triphosphate pyrophosphatase.